A 558-amino-acid polypeptide reads, in one-letter code: MNAPVPVPRVADFTCEKKPASGSRGMVVTNHPLASAAGAQILLAGGNAIDAAVASLFALTVAEPMMVGILGGGLSHIRLADGRHVVIDNLSTAPGKATAEMYECLSDEIGKQRDTRDRQNVVGAKAVAVPGALKGWCEALARFGTLPLAEVLQPAIGLAERGFVVTPYLSNCITDNAGDLARDPGLAAMLLPGGKPLQPGMRLVQSDYAASLKLIAAEGPDALYGGKLGRALTDYMAANGGLIDQADLANYRIELREPIRGSYRGYEIIGPPPPSSSGVHITQMLNILEGYDIGSLGFGSTDAVHLLAEALKIAFADRAVATADPAFVKVPVARLIDKAYADERRALIEMEQAKSWTAGLSGGESADTTHVTVADAMGNVVSATQTINGLFGACVQIPGTGMIANNYMYNFDPHPGRALSIAPGKRVFTSMAPMMALKEGRIAFALGLPGALRIFPSALQAIVNLIDHRMSLQEAVEAPRVWTEGGVLELEEAIPEAVAQALIARGHKVVRSPRVAGGMNAIAFNPDGTLTGAACWRADGTPVAISGGLARAGARFTI.

Threonine 368 (nucleophile) is an active-site residue.

Belongs to the gamma-glutamyltransferase family. In terms of assembly, dimer of two non-identical chains processed from the same precursor.

The catalysed reaction is (7R)-7-(4-carboxybutanamido)cephalosporanate + H2O = (7R)-7-aminocephalosporanate + glutarate. It catalyses the reaction an N-terminal (5-L-glutamyl)-[peptide] + an alpha-amino acid = 5-L-glutamyl amino acid + an N-terminal L-alpha-aminoacyl-[peptide]. The enzyme catalyses glutathione + H2O = L-cysteinylglycine + L-glutamate. It carries out the reaction an S-substituted glutathione + H2O = an S-substituted L-cysteinylglycine + L-glutamate. In terms of biological role, besides the cephalosporin acylase I activity which converts GL-7ACA into 7-ACA; this enzyme displays some gamma glutamyltranspeptidase activity. The sequence is that of Acylase ACY 1 proenzyme (acyI) from Pseudomonas sp. (strain SE83).